The following is a 539-amino-acid chain: Chaperonin GroEL (539 aa).

Residues 29–32, 86–90, glycine 413, 477–479, and aspartate 493 each bind ATP; these read TLGP, DGTTT, and DAL.

This sequence belongs to the chaperonin (HSP60) family. Forms a cylinder of 14 subunits composed of two heptameric rings stacked back-to-back. Interacts with the co-chaperonin GroES.

It localises to the cytoplasm. The enzyme catalyses ATP + H2O + a folded polypeptide = ADP + phosphate + an unfolded polypeptide.. Functionally, together with its co-chaperonin GroES, plays an essential role in assisting protein folding. The GroEL-GroES system forms a nano-cage that allows encapsulation of the non-native substrate proteins and provides a physical environment optimized to promote and accelerate protein folding. This Clostridium perfringens (strain 13 / Type A) protein is Chaperonin GroEL.